We begin with the raw amino-acid sequence, 405 residues long: Nuclear hormone receptor family member nhr-199 (405 aa).

The nuclear receptor DNA-binding region spans 20–111; the sequence is IPYCLICSEV…MGMQRSSVQQ (92 aa). 2 consecutive NR C4-type zinc fingers follow at residues 23 to 44 and 60 to 94; these read CLICSEVADGNHFGVAAACRAC and CGRNGQCFFLSCKFLLVGFQISPLSSDARSMCKAC. The NR LBD domain maps to 126 to 376; that stretch reads RGKPVLNKLR…PFSRIHGNQK (251 aa).

This sequence belongs to the nuclear hormone receptor family.

It is found in the nucleus. Its function is as follows. Orphan nuclear receptor. The sequence is that of Nuclear hormone receptor family member nhr-199 (nhr-199) from Caenorhabditis elegans.